The sequence spans 93 residues: MVRAVVATLLVVLVVASCVSAQLNFSPGWGKRAAAGGEGTGMHPPAGAVVPPPSSLAGESCGTIPVTTVMHIYRLIRAEATRLVQCQDEEYLG.

The signal sequence occupies residues 1–21 (MVRAVVATLLVVLVVASCVSA). Gln-22 carries the pyrrolidone carboxylic acid modification. The residue at position 29 (Trp-29) is a Tryptophan amide. The propeptide occupies 33 to 93 (AAAGGEGTGM…VQCQDEEYLG (61 aa)). The tract at residues 34 to 56 (AAGGEGTGMHPPAGAVVPPPSSL) is disordered.

Belongs to the AKH/HRTH/RPCH family. As to expression, strongly expressed in the eyestalk and weakly in brain. Not expressed in other tissues tested.

The protein resides in the secreted. Its function is as follows. This hormone adapts the animal to light backgrounds by stimulating concentration of the pigment of its red body-chromatophores. This Penaeus monodon (Giant tiger prawn) protein is Red pigment-concentrating hormone.